Consider the following 535-residue polypeptide: Glucose-6-phosphate isomerase (535 aa).

Catalysis depends on glutamate 347, which acts as the Proton donor. Active-site residues include histidine 378 and lysine 493.

This sequence belongs to the GPI family.

Its subcellular location is the cytoplasm. It carries out the reaction alpha-D-glucose 6-phosphate = beta-D-fructose 6-phosphate. Its pathway is carbohydrate biosynthesis; gluconeogenesis. It functions in the pathway carbohydrate degradation; glycolysis; D-glyceraldehyde 3-phosphate and glycerone phosphate from D-glucose: step 2/4. Catalyzes the reversible isomerization of glucose-6-phosphate to fructose-6-phosphate. The polypeptide is Glucose-6-phosphate isomerase (Chlamydia felis (strain Fe/C-56) (Chlamydophila felis)).